Here is a 212-residue protein sequence, read N- to C-terminus: MAVAANKRSVMTLFSGPTDIYSHQVRIVLAEKGVSFEIEHVEKDNPPQDLIDLNPNQSVPTLVDRELTLWESRIIMEYLDERFPHPPLMPVYPVARGESRLYMHRIEKDWYTLMNTIINGSASEADAARKQLREELLAIAPVFGQKPYFLSDEFSLVDCYLAPLLWRLPQLGIEFSGPGAKELKGYMTRVFERDSFLASLTEAEREMRLGRS.

In terms of domain architecture, GST N-terminal spans 9 to 87 (SVMTLFSGPT…YLDERFPHPP (79 aa)). The 118-residue stretch at 92-209 (YPVARGESRL…LTEAEREMRL (118 aa)) folds into the GST C-terminal domain.

The protein belongs to the GST superfamily. HSP26 family.

Functionally, forms an equimolar complex with the RNA polymerase holoenzyme (RNAP) but not with the core enzyme. This Escherichia coli O157:H7 protein is Stringent starvation protein A (sspA).